The following is a 188-amino-acid chain: Cytochrome c-type protein NrfB (188 aa).

An N-terminal signal peptide occupies residues 1-32 (MSVLRSLLTAGVLASGLLWSLNGITATPAAQA). Positions 49, 52, 53, 78, 81, 82, 113, 116, 117, 138, 141, 142, 163, 166, and 167 each coordinate heme.

Post-translationally, binds 5 heme groups per subunit.

The protein resides in the periplasm. It functions in the pathway energy metabolism; nitrogen metabolism. Plays a role in nitrite reduction. This is Cytochrome c-type protein NrfB (nrfB) from Escherichia coli O6:H1 (strain CFT073 / ATCC 700928 / UPEC).